The primary structure comprises 200 residues: Holliday junction branch migration complex subunit RuvA (200 aa).

The segment at 1–63 (MYAYIKGTLT…EDAQLLYGFI (63 aa)) is domain I. The segment at 64 to 142 (NQEEKDMFLS…INDVDSSQIL (79 aa)) is domain II. Positions 143–149 (NTDTQDH) are flexible linker. Positions 150–200 (ANAPIIKEALLALEALGYSKRELTKVEKSLSKETFDSVDDAVKRGLQLLIA) are domain III.

Belongs to the RuvA family. Homotetramer. Forms an RuvA(8)-RuvB(12)-Holliday junction (HJ) complex. HJ DNA is sandwiched between 2 RuvA tetramers; dsDNA enters through RuvA and exits via RuvB. An RuvB hexamer assembles on each DNA strand where it exits the tetramer. Each RuvB hexamer is contacted by two RuvA subunits (via domain III) on 2 adjacent RuvB subunits; this complex drives branch migration. In the full resolvosome a probable DNA-RuvA(4)-RuvB(12)-RuvC(2) complex forms which resolves the HJ.

Its subcellular location is the cytoplasm. In terms of biological role, the RuvA-RuvB-RuvC complex processes Holliday junction (HJ) DNA during genetic recombination and DNA repair, while the RuvA-RuvB complex plays an important role in the rescue of blocked DNA replication forks via replication fork reversal (RFR). RuvA specifically binds to HJ cruciform DNA, conferring on it an open structure. The RuvB hexamer acts as an ATP-dependent pump, pulling dsDNA into and through the RuvAB complex. HJ branch migration allows RuvC to scan DNA until it finds its consensus sequence, where it cleaves and resolves the cruciform DNA. The chain is Holliday junction branch migration complex subunit RuvA from Staphylococcus saprophyticus subsp. saprophyticus (strain ATCC 15305 / DSM 20229 / NCIMB 8711 / NCTC 7292 / S-41).